The chain runs to 369 residues: Anhydro-N-acetylmuramic acid kinase (369 aa).

Position 12-19 (12-19 (GTSMDGVD)) interacts with ATP.

This sequence belongs to the anhydro-N-acetylmuramic acid kinase family.

The enzyme catalyses 1,6-anhydro-N-acetyl-beta-muramate + ATP + H2O = N-acetyl-D-muramate 6-phosphate + ADP + H(+). The protein operates within amino-sugar metabolism; 1,6-anhydro-N-acetylmuramate degradation. Its pathway is cell wall biogenesis; peptidoglycan recycling. In terms of biological role, catalyzes the specific phosphorylation of 1,6-anhydro-N-acetylmuramic acid (anhMurNAc) with the simultaneous cleavage of the 1,6-anhydro ring, generating MurNAc-6-P. Is required for the utilization of anhMurNAc either imported from the medium or derived from its own cell wall murein, and thus plays a role in cell wall recycling. The protein is Anhydro-N-acetylmuramic acid kinase of Shewanella sp. (strain MR-7).